The following is a 534-amino-acid chain: Serine/threonine-protein kinase Nek6 (534 aa).

One can recognise a Protein kinase domain in the interval 4-257 (YEVVEQIGRG…AGELLRHPYL (254 aa)). ATP-binding positions include 10–18 (IGRGAYGSA) and lysine 33. Residue aspartate 129 is the Proton acceptor of the active site. 2 disordered regions span residues 278–306 (KSNL…SSEA) and 425–449 (KAHT…SSPK).

Belongs to the protein kinase superfamily. NEK Ser/Thr protein kinase family. NIMA subfamily. Interacts with DIS1. Post-translationally, ubiquitinated by the E3 ligase DIS1. Ubiquitination of NEK6 leads to its degradation via the 26S proteasome-dependent pathway. As to expression, expressed in anthers, pistils and leaves.

The protein localises to the cytoplasm. The catalysed reaction is L-seryl-[protein] + ATP = O-phospho-L-seryl-[protein] + ADP + H(+). The enzyme catalyses L-threonyl-[protein] + ATP = O-phospho-L-threonyl-[protein] + ADP + H(+). Functionally, may be involved in plant development processes. This Oryza sativa subsp. japonica (Rice) protein is Serine/threonine-protein kinase Nek6.